The chain runs to 157 residues: Probable succinate transporter subunit YjjB (157 aa).

Helical transmembrane passes span 8–28 (LALA…AMVF), 50–70 (MILM…SMLG), 87–107 (VFTV…TAMI), and 129–149 (FLTA…PGLW).

Belongs to the ThrE exporter (TC 2.A.79) family. The transporter is composed of YjjB and YjjP.

Its subcellular location is the cell inner membrane. Functionally, involved in succinate export with YjjP. Both proteins are required for export. The sequence is that of Probable succinate transporter subunit YjjB from Escherichia coli O157:H7 (strain EC4115 / EHEC).